The chain runs to 451 residues: NADP-specific glutamate dehydrogenase (451 aa).

The active site involves Lys-113. Ser-252 is subject to Phosphoserine.

This sequence belongs to the Glu/Leu/Phe/Val dehydrogenases family. In terms of assembly, homohexamer.

The enzyme catalyses L-glutamate + NADP(+) + H2O = 2-oxoglutarate + NH4(+) + NADPH + H(+). The sequence is that of NADP-specific glutamate dehydrogenase (gdh1) from Schizosaccharomyces pombe (strain 972 / ATCC 24843) (Fission yeast).